The primary structure comprises 688 residues: MAQDLLLEIGVEEMPSAYMPRVLKDLKDLAQKNLAEARLSCGEVLTLGTPRRLCLWVKEISEEQEDSLLENRGPKKSIAFDANGNPSKAGLGFARSQGVDFRELQIREVSGVEYLFAIKKEKGQAAEQILPGLLLKVIHSLSFPKSMTWSYYQTRFARPIRWLLAIFGDKNVEFNIENIKSANYTYGHRFLSTGVLLVTSIDDYFRVLREHYVILDQAERKKMIWQQVQKVAGEAGGKAMENEELLEEVAFLVEFPTAFYGEFSPSYLDVPPEVLTTSMIEHQRYFPVYNNEGRLLPGFVGVRNGTDYCLDIVRAGNERVLKARLEDALFFWNEDSRKSLEEMSAKLKNVLFHERLGTLADKVLRLQKLALFIGQQTGLGQPEKLQRSALLCKADLMSNMVYEFPELQGIMGRYYASGSAEEPEVAEAIFEHYLPRFAGDKLPSSAGGIVLSLAEKMDNLMGCFSIGIKPSGSQDPYALRRQALGLVNIILDKKLSIDLKLVFEQAYLGYKDIDLEKSREDSVKELLDFIYQRMRGVLLDNGISYDVVDAALSRPSFDLFETYYRAFKLQEFKKSPVFEDFMVVYNRVHNLSRKWESEEIDLDLLVDESEKNLCQKLPGLQEDIKKSLIAQDYTRALELLAALRADIDQFFTAVMVMVDDERLKAARLGILKSIANMFNSIADFSKIV.

It belongs to the class-II aminoacyl-tRNA synthetase family. As to quaternary structure, tetramer of two alpha and two beta subunits.

Its subcellular location is the cytoplasm. It carries out the reaction tRNA(Gly) + glycine + ATP = glycyl-tRNA(Gly) + AMP + diphosphate. This chain is Glycine--tRNA ligase beta subunit, found in Syntrophomonas wolfei subsp. wolfei (strain DSM 2245B / Goettingen).